The following is a 470-amino-acid chain: Serine--tRNA ligase (470 aa).

272-274 (TAE) contacts L-serine. 303-305 (RAE) contributes to the ATP binding site. Residue Glu326 participates in L-serine binding. Residue 393–396 (EISS) participates in ATP binding. L-serine is bound at residue Ser428.

Belongs to the class-II aminoacyl-tRNA synthetase family. Type-1 seryl-tRNA synthetase subfamily. Homodimer. The tRNA molecule binds across the dimer.

The protein localises to the cytoplasm. It carries out the reaction tRNA(Ser) + L-serine + ATP = L-seryl-tRNA(Ser) + AMP + diphosphate + H(+). It catalyses the reaction tRNA(Sec) + L-serine + ATP = L-seryl-tRNA(Sec) + AMP + diphosphate + H(+). Its pathway is aminoacyl-tRNA biosynthesis; selenocysteinyl-tRNA(Sec) biosynthesis; L-seryl-tRNA(Sec) from L-serine and tRNA(Sec): step 1/1. In terms of biological role, catalyzes the attachment of serine to tRNA(Ser). Is also able to aminoacylate tRNA(Sec) with serine, to form the misacylated tRNA L-seryl-tRNA(Sec), which will be further converted into selenocysteinyl-tRNA(Sec). The chain is Serine--tRNA ligase from Nitrobacter hamburgensis (strain DSM 10229 / NCIMB 13809 / X14).